We begin with the raw amino-acid sequence, 193 residues long: NADH-quinone oxidoreductase subunit B (193 aa).

Positions 72, 73, 137, and 167 each coordinate [4Fe-4S] cluster.

This sequence belongs to the complex I 20 kDa subunit family. NDH-1 is composed of 14 different subunits. Subunits NuoB, C, D, E, F, and G constitute the peripheral sector of the complex. It depends on [4Fe-4S] cluster as a cofactor.

The protein localises to the cell inner membrane. It catalyses the reaction a quinone + NADH + 5 H(+)(in) = a quinol + NAD(+) + 4 H(+)(out). Its function is as follows. NDH-1 shuttles electrons from NADH, via FMN and iron-sulfur (Fe-S) centers, to quinones in the respiratory chain. Couples the redox reaction to proton translocation (for every two electrons transferred, four hydrogen ions are translocated across the cytoplasmic membrane), and thus conserves the redox energy in a proton gradient. In Brucella abortus (strain S19), this protein is NADH-quinone oxidoreductase subunit B.